Consider the following 405-residue polypeptide: Tyrosine--tRNA ligase (405 aa).

Tyrosine 35 provides a ligand contact to L-tyrosine. Residues 40–49 (TTSSSLHIGH) carry the 'HIGH' region motif. Tyrosine 166 and glutamine 170 together coordinate L-tyrosine. Positions 226–230 (KMGKS) match the 'KMSKS' region motif. ATP is bound at residue lysine 229. Residues 340–404 (ILLIDLMLDS…VGKKKFLRIV (65 aa)) enclose the S4 RNA-binding domain.

This sequence belongs to the class-I aminoacyl-tRNA synthetase family. TyrS type 1 subfamily. In terms of assembly, homodimer.

The protein localises to the cytoplasm. The catalysed reaction is tRNA(Tyr) + L-tyrosine + ATP = L-tyrosyl-tRNA(Tyr) + AMP + diphosphate + H(+). Functionally, catalyzes the attachment of tyrosine to tRNA(Tyr) in a two-step reaction: tyrosine is first activated by ATP to form Tyr-AMP and then transferred to the acceptor end of tRNA(Tyr). The chain is Tyrosine--tRNA ligase from Borrelia garinii subsp. bavariensis (strain ATCC BAA-2496 / DSM 23469 / PBi) (Borreliella bavariensis).